The sequence spans 1006 residues: Phosphatidylinositol-3,5-bisphosphate 3-phosphatase MTMR3 (1006 aa).

Low complexity predominate over residues 1–10; it reads MTVTSSAAID. The tract at residues 1–29 is disordered; it reads MTVTSSAAIDIGGGGGGRRSDRLDSDRTS. A compositionally biased stretch (basic and acidic residues) spans 18 to 29; sequence RRSDRLDSDRTS. Residues 224–630 form the Myotubularin phosphatase domain; sequence AWKFSEAVDE…INLRVWHEVF (407 aa). Positions 377, 402, and 403 each coordinate a 1,2-diacyl-sn-glycero-3-phospho-(1D-myo-inositol-3,5-bisphosphate). A 1,2-diacyl-sn-glycero-3-phospho-(1D-myo-inositol-3-phosphate) contacts are provided by Asn-377, Asn-402, and Ile-403. Catalysis depends on Cys-463, which acts as the Phosphocysteine intermediate. The a 1,2-diacyl-sn-glycero-3-phospho-(1D-myo-inositol-3,5-bisphosphate) site is built by Ser-464, Asp-465, Gly-466, Trp-467, Asp-468, Arg-469, Lys-505, and Arg-509. Residues Ser-464, Asp-465, Gly-466, Trp-467, Asp-468, and Arg-469 each coordinate a 1,2-diacyl-sn-glycero-3-phospho-(1D-myo-inositol-3-phosphate). Residue Arg-509 participates in a 1,2-diacyl-sn-glycero-3-phospho-(1D-myo-inositol-3-phosphate) binding. The tract at residues 641–705 is disordered; that stretch reads FSPKEERPLS…PSDNTNSLPM (65 aa). Residues 651–705 show a composition bias toward polar residues; that stretch reads GCTTPMNTSTSTNLVKSKSSESINSLNVDGSAKESSQQHPTCSTTPSDNTNSLPM. The FYVE-type zinc-finger motif lies at 818–883; the sequence is EGESGHCAYC…ACDSCYDSMH (66 aa). Positions 824, 827, 845, 848, 853, 856, 875, and 878 each coordinate Zn(2+). The interval 886–1006 is disordered; that stretch reads DLKLSSSSTT…DVLDVNEQPL (121 aa). Low complexity-rich tracts occupy residues 890–901 and 913–926; these read SSSSTTTTSSST and DNNS…VSEN. 2 stretches are compositionally biased toward basic and acidic residues: residues 933–954 and 976–985; these read VEEK…ETKC and HSRDPLKSID.

It belongs to the protein-tyrosine phosphatase family. Non-receptor class myotubularin subfamily. In terms of tissue distribution, expressed in the body wall muscle and in eggs. Expressed in head neurons. Expressed in the intestine. Expressed in pharyngeal cells, vulval muscle cells and cells of the tail region.

The protein localises to the cytoplasm. It localises to the membrane. The enzyme catalyses a 1,2-diacyl-sn-glycero-3-phospho-(1D-myo-inositol-3,5-bisphosphate) + H2O = a 1,2-diacyl-sn-glycero-3-phospho-(1D-myo-inositol-5-phosphate) + phosphate. It carries out the reaction a 1,2-diacyl-sn-glycero-3-phospho-(1D-myo-inositol-3-phosphate) + H2O = a 1,2-diacyl-sn-glycero-3-phospho-(1D-myo-inositol) + phosphate. It catalyses the reaction 1,2-dihexadecanoyl-sn-glycero-3-phospho-(1D-myo-inositol-3-phosphate) + H2O = 1,2-dihexadecanoyl-sn-glycero-3-phospho-(1D-myo-inositol) + phosphate. The catalysed reaction is 1,2-dihexadecanoyl-sn-glycero-3-phospho-(1D-myo-inositol-3,5-phosphate) + H2O = 1,2-dihexadecanoyl-sn-glycero-3-phospho-(1D-myo-inositol-5-phosphate) + phosphate. The enzyme catalyses 1,2-dioctanoyl-sn-glycero-3-phospho-(1-D-myo-inositol-3-phosphate) + H2O = 1,2-dioctanoyl-sn-glycero-3-phospho-(1D-myo-inositol) + phosphate. Its activity is regulated as follows. Inhibited by sodium vanadate and peroxide. Its function is as follows. Preferentially dephosphorylates phosphatidylinositol 3-phosphate (PI3P), and has some activity towards phosphatidylinositol 3,5-bisphosphate (PI35P). Positively regulates autophagy and is recruited to autophagosomes by PI3P where it catalyzes PI3P turnover to promote autophagosome maturation. Thought to have a role in maintenance of muscle function. Involved in locomotion and lifespan determination. This Caenorhabditis elegans protein is Phosphatidylinositol-3,5-bisphosphate 3-phosphatase MTMR3.